Here is an 826-residue protein sequence, read N- to C-terminus: Breast cancer anti-estrogen resistance protein 3 homolog (826 aa).

At Ala2 the chain carries N-acetylalanine. A phosphoserine mark is found at Ser32, Ser78, Ser83, and Ser182. Positions 46–81 (SIHGTLPRKKKGPPPIRSCDNFSHVGTLPHSRSPRH) are disordered. Residues 154 to 253 (WYHGRIPRQV…QSGAIIFQPV (100 aa)) form the SH2 domain. The segment at 268 to 287 (ASSPDRAHEGSLTEGRPDAA) is disordered. A Phosphoserine modification is found at Ser291. The tract at residues 294-321 (VGGTQAREQGLPRGNLLRNKEKSGSQPA) is disordered. The residue at position 335 (Lys335) is an N6-methyllysine. The tract at residues 348–406 (KLTPQSPSVGTSPCPNSPVFRTGSEPTLSPAVVRRVSSDARPGEALRGSDSQLCPKPPP) is disordered. Over residues 350 to 361 (TPQSPSVGTSPC) the composition is skewed to polar residues. 4 positions are modified to phosphoserine: Ser359, Ser364, Ser376, and Ser472. The tract at residues 480–501 (DDDDRTRPWKPPPAPGDTVGED) is disordered. The Ras-GEF domain maps to 549 to 819 (DPKVIAQHLL…TALSRKLEPP (271 aa)). The mediates the interaction with BCAR1/p130CAS stretch occupies residues 745–749 (LATAR).

In terms of assembly, part of a complex comprised of PTPRA, BCAR1, BCAR3 (via SH2 domain) and SRC; the formation of the complex is dependent on integrin mediated-tyrosine phosphorylation of PTPRA. Within the complex, interacts (via SH2 domain) with PTPRA (when phosphorylated on 'Tyr-797'). Interacts (via Ras-GEF domain) with BCAR1. Interacts (via Ras-GEF domain) with NEDD9. Interacts with PTK2/FAK1. Interacts with PTPN1. Interacts (via SH2 domain) with EGFR (when tyrosine-phosphorylated). In terms of processing, phosphorylated on tyrosine residues.

Its subcellular location is the cytoplasm. The protein resides in the cell junction. It localises to the focal adhesion. Functionally, acts as an adapter protein downstream of several growth factor receptors to promote cell proliferation, migration, and redistribution of actin fibers. Specifically involved in INS/insulin signaling pathway by mediating MAPK1/ERK2-MAPK3/ERK1 activation and DNA synthesis. Promotes insulin-mediated membrane ruffling. In response to vasoconstrictor peptide EDN1, involved in the activation of RAP1 downstream of PTK2B via interaction with phosphorylated BCAR1. Inhibits cell migration and invasion via regulation of TGFB-mediated matrix digestion, actin filament rearrangement, and inhibition of invadopodia activity. May inhibit TGFB-SMAD signaling, via facilitating BCAR1 and SMAD2 and/or SMAD3 interaction. Regulates EGF-induced DNA synthesis. Required for the maintenance of ocular lens morphology and structural integrity, potentially via regulation of focal adhesion complex signaling. Acts upstream of PTPRA to regulate the localization of BCAR1 and PTPRA to focal adhesions, via regulation of SRC-mediated phosphorylation of PTPRA. Positively regulates integrin-induced tyrosine phosphorylation of BCAR1. Acts as a guanine nucleotide exchange factor (GEF) for small GTPases RALA, RAP1A and RRAS. However, in a contrasting study, lacks GEF activity towards RAP1. The sequence is that of Breast cancer anti-estrogen resistance protein 3 homolog (BCAR3) from Bos taurus (Bovine).